The following is a 326-amino-acid chain: Protein-arginine N-acetylglucosaminyltransferase NleB2 (326 aa).

UDP-N-acetyl-alpha-D-glucosamine-binding positions include 45 to 47 (QWF), Tyr-69, and 216 to 219 (YLDM). The DXD motif motif lies at 218–220 (DMD). Position 220 (Asp-220) interacts with Mn(2+). The active-site Proton acceptor is the Glu-250. Residues Asn-317 and Ser-319 each coordinate Mn(2+). UDP-N-acetyl-alpha-D-glucosamine-binding positions include Ser-319 and 324-326 (SSW).

The protein belongs to the glycosyltransferase NleB family. It depends on Mn(2+) as a cofactor.

It is found in the secreted. The protein resides in the host cell. The enzyme catalyses L-arginyl-[protein] + UDP-N-acetyl-alpha-D-glucosamine = N(omega)-(N-acetyl-beta-D-glucosaminyl)-L-arginyl-[protein] + UDP + H(+). Protein-arginine N-acetylglucosaminyltransferase effector that catalyzes the transfer of a single N-acetylglucosamine (GlcNAc) to a conserved arginine residue of host target proteins. In contrast to NleB1, not able to disrupt TNF signaling in infected cells. Shows a lower enzymatic activity than NleB1. The chain is Protein-arginine N-acetylglucosaminyltransferase NleB2 from Escherichia coli O127:H6 (strain E2348/69 / EPEC).